Here is a 365-residue protein sequence, read N- to C-terminus: Sesquiterpene synthase 3 (365 aa).

4 residues coordinate Mg(2+): Asp-117, Asn-253, Ser-257, and Glu-261. Residues 117–121 (DDWSD) carry the DDXXD motif motif. Positions 253-261 (NDILSYNRE) match the NSE/DTE motif motif. The (2E,6E)-farnesyl diphosphate site is built by Arg-341 and Tyr-342.

It belongs to the terpene synthase family. Mg(2+) is required as a cofactor.

It catalyses the reaction (2E,6E)-farnesyl diphosphate = delta-cadinene + diphosphate. Terpene cyclase that catalyzes the cyclization of farnesyl diphosphate (FPP) to various sesquiterpenes, including beta-elemene gamma-cadinene, delta-cadinene, and alpha-cadinene. The protein is Sesquiterpene synthase 3 of Postia placenta (strain ATCC 44394 / Madison 698-R) (Brown rot fungus).